The chain runs to 309 residues: Carboxylesterase Culp6 homolog (309 aa).

The helical transmembrane segment at 5-25 threads the bilayer; that stretch reads ITVIAVLIVLALIGVGIVQYV. Residues Cys-55 and Cys-146 are joined by a disulfide bond. Active-site residues include Ser-157, Asp-253, and His-279. Cys-249 and Cys-256 are joined by a disulfide.

This sequence belongs to the cutinase family.

Its subcellular location is the cell membrane. The catalysed reaction is a butanoate ester + H2O = an aliphatic alcohol + butanoate + H(+). Its activity is regulated as follows. Inhibited by tetrahydrolipstatin (THL), a specific lipase inhibitor. Esterase that may be involved in cell wall biosynthesis and/or maintenance. Hydrolyzes pNP-butyrate (C4). The polypeptide is Carboxylesterase Culp6 homolog (Corynebacterium glutamicum (strain ATCC 13032 / DSM 20300 / JCM 1318 / BCRC 11384 / CCUG 27702 / LMG 3730 / NBRC 12168 / NCIMB 10025 / NRRL B-2784 / 534)).